Consider the following 455-residue polypeptide: Argininosuccinate lyase (455 aa).

This sequence belongs to the lyase 1 family. Argininosuccinate lyase subfamily.

The protein localises to the cytoplasm. It catalyses the reaction 2-(N(omega)-L-arginino)succinate = fumarate + L-arginine. It participates in amino-acid biosynthesis; L-arginine biosynthesis; L-arginine from L-ornithine and carbamoyl phosphate: step 3/3. The sequence is that of Argininosuccinate lyase from Caulobacter sp. (strain K31).